Here is a 56-residue protein sequence, read N- to C-terminus: Large ribosomal subunit protein bL33 (56 aa).

Residues 1–12 (MASKGGRDKIKL) show a composition bias toward basic and acidic residues. The segment at 1 to 30 (MASKGGRDKIKLESTAGTGHFYTTTKNKRT) is disordered. Residues 15–25 (TAGTGHFYTTT) are compositionally biased toward polar residues.

This sequence belongs to the bacterial ribosomal protein bL33 family.

The protein is Large ribosomal subunit protein bL33 of Ralstonia nicotianae (strain ATCC BAA-1114 / GMI1000) (Ralstonia solanacearum).